A 583-amino-acid chain; its full sequence is Threonine--tRNA ligase (583 aa).

Residues 185–478 form a catalytic region; the sequence is DHRKLGRELN…LVEHYGGAFP (294 aa). The Zn(2+) site is built by Cys278, His329, and His455.

Belongs to the class-II aminoacyl-tRNA synthetase family. As to quaternary structure, homodimer. The cofactor is Zn(2+).

The protein resides in the cytoplasm. The enzyme catalyses tRNA(Thr) + L-threonine + ATP = L-threonyl-tRNA(Thr) + AMP + diphosphate + H(+). In terms of biological role, catalyzes the attachment of threonine to tRNA(Thr) in a two-step reaction: L-threonine is first activated by ATP to form Thr-AMP and then transferred to the acceptor end of tRNA(Thr). Also edits incorrectly charged L-seryl-tRNA(Thr). In Borrelia duttonii (strain Ly), this protein is Threonine--tRNA ligase.